Here is a 240-residue protein sequence, read N- to C-terminus: 4-hydroxy-tetrahydrodipicolinate reductase (240 aa).

Residues 8–13, 78–80, and 102–105 each bind NAD(+); these read GSTGKM, GTT, and SANM. The Proton donor/acceptor role is filled by histidine 134. Histidine 135 contacts (S)-2,3,4,5-tetrahydrodipicolinate. The active-site Proton donor is the lysine 138. 144–145 is a binding site for (S)-2,3,4,5-tetrahydrodipicolinate; it reads GT.

Belongs to the DapB family.

Its subcellular location is the cytoplasm. The catalysed reaction is (S)-2,3,4,5-tetrahydrodipicolinate + NAD(+) + H2O = (2S,4S)-4-hydroxy-2,3,4,5-tetrahydrodipicolinate + NADH + H(+). The enzyme catalyses (S)-2,3,4,5-tetrahydrodipicolinate + NADP(+) + H2O = (2S,4S)-4-hydroxy-2,3,4,5-tetrahydrodipicolinate + NADPH + H(+). It functions in the pathway amino-acid biosynthesis; L-lysine biosynthesis via DAP pathway; (S)-tetrahydrodipicolinate from L-aspartate: step 4/4. Its function is as follows. Catalyzes the conversion of 4-hydroxy-tetrahydrodipicolinate (HTPA) to tetrahydrodipicolinate. The polypeptide is 4-hydroxy-tetrahydrodipicolinate reductase (Rickettsia canadensis (strain McKiel)).